The sequence spans 333 residues: Alpha-N-acetylgalactosaminide alpha-2,6-sialyltransferase 6 (333 aa).

Positions 1–12 (MACSRPPSQCDP) are enriched in polar residues. The disordered stretch occupies residues 1–27 (MACSRPPSQCDPTTLPPGPPAGRWPLP). The Cytoplasmic portion of the chain corresponds to 1 to 43 (MACSRPPSQCDPTTLPPGPPAGRWPLPFSRRRREMSSNKEQRS). Residues 44 to 64 (AVFVILFALITILILYSSNSA) traverse the membrane as a helical; Signal-anchor for type II membrane protein segment. Residues 65 to 333 (NEVFHYGSLR…GITFSHPSWT (269 aa)) lie on the Lumenal side of the membrane. Asn98 carries an N-linked (GlcNAc...) asparagine glycan. Cys108 and Cys256 form a disulfide bridge.

This sequence belongs to the glycosyltransferase 29 family. As to expression, widely expressed, the gene expression is most abundant in colon, brain, liver, and heart.

Its subcellular location is the golgi apparatus membrane. The enzyme catalyses a ganglioside GM1b (d18:1(4E)) + CMP-N-acetyl-beta-neuraminate = a ganglioside GD1alpha (d18:1(4E)) + CMP + H(+). It catalyses the reaction a ganglioside GD1a (d18:1(4E)) + CMP-N-acetyl-beta-neuraminate = a ganglioside GT1aalpha (d18:1(4E)) + CMP + H(+). It carries out the reaction a ganglioside GT1b (d18:1(4E)) + CMP-N-acetyl-beta-neuraminate = a ganglioside GQ1balpha (d18:1(4E)) + CMP + H(+). The catalysed reaction is N-acetyl-alpha-neuraminosyl-(2-&gt;3)-beta-D-galactosyl-(1-&gt;3)-N-acetyl-beta-D-glucosaminyl-(1-&gt;3)-beta-D-galactosyl-(1-&gt;4)-beta-D-glucosyl-(1&lt;-&gt;1')-N-acyl-sphing-4-enine + CMP-N-acetyl-beta-neuraminate = N-acetyl-alpha-neuraminosyl-(2-&gt;3)-beta-D-galactosyl-(1-&gt;3)-[N-acetyl-alpha-neuraminosyl-(2-&gt;6)]-N-acetyl-beta-D-glucosaminyl-(1-&gt;3)-beta-D-galactosyl-(1-&gt;4)-beta-D-glucosyl-(1&lt;-&gt;1')-N-acyl-sphing-4-enine + CMP + H(+). The enzyme catalyses a globoside MSGG + CMP-N-acetyl-beta-neuraminate = a globoside DSGG + CMP + H(+). It catalyses the reaction 3-O-[alpha-Neu5Ac-(2-&gt;3)-beta-D-Gal-(1-&gt;3)-alpha-D-GalNAc]-L-Ser-[protein] + CMP-N-acetyl-beta-neuraminate = a 3-O-{alpha-Neu5Ac-(2-&gt;3)-beta-D-Gal-(1-&gt;3)-[alpha-Neu5Ac-(2-&gt;6)]-alpha-D-GalNAc}-L-seryl-[protein] + CMP + H(+). It carries out the reaction 3-O-[alpha-Neu5Ac-(2-&gt;3)-beta-D-Gal-(1-&gt;3)-alpha-D-GalNAc]-L-Thr-[protein] + CMP-N-acetyl-beta-neuraminate = a 3-O-{alpha-Neu5Ac-(2-&gt;3)-beta-D-Gal-(1-&gt;3)-[alpha-Neu5Ac-(2-&gt;6)]-alpha-D-GalNAc}-L-threonyl-[protein] + CMP + H(+). In terms of biological role, transfers the sialyl group (N-acetyl-alpha-neuraminyl or NeuAc) from CMP-NeuAc onto glycolipids, forming an alpha-2,6-linkage. Produces branched type disialyl structures by transfer of a sialyl group onto the GalNAc or GlcNAc residue inside backbone core chains having a terminal sialic acid with an alpha-2,3-linkage on Gal. ST6GalNAcVI prefers glycolipids to glycoproteins, predominantly catalyzing the biosynthesis of ganglioside GD1alpha from GM1b. Also has activity toward GD1a and GT1b, and can generate DSGG (disialylgalactosylgloboside) from MSGG (monosialylgalactosylgloboside). Besides GMb1, MSGG and other glycolipids, it shows activity towards sialyl Lc4Cer generating disialyl Lc4Cer, which can lead to the synthesis of disialyl Lewis a (Le(a)), suggested to be a cancer-associated antigen. In Mus musculus (Mouse), this protein is Alpha-N-acetylgalactosaminide alpha-2,6-sialyltransferase 6 (St6galnac6).